The primary structure comprises 425 residues: Histone-binding protein RBBP7 (425 aa).

N-acetylalanine is present on Ala2. A Phosphoserine modification is found at Ser3. At Lys4 the chain carries N6-acetyllysine; alternate. A Glycyl lysine isopeptide (Lys-Gly) (interchain with G-Cter in SUMO2); alternate cross-link involves residue Lys4. A Glycyl lysine isopeptide (Lys-Gly) (interchain with G-Cter in ubiquitin); alternate cross-link involves residue Lys4. Thr10 carries the phosphothreonine modification. WD repeat units lie at residues 47-122, 128-173, 181-217, 228-269, 275-312, 318-369, and 376-403; these read QWLP…KINH, RARY…LRLR, GLSW…KIVD, VVED…HLVD, VNCL…LHTF, EIFQ…LFIH, and ISDF…IWQM. Ser95 bears the Phosphoserine mark. Residue Lys101 forms a Glycyl lysine isopeptide (Lys-Gly) (interchain with G-Cter in SUMO2) linkage. Lys119 bears the N6-acetyllysine mark. Residue Lys155 forms a Glycyl lysine isopeptide (Lys-Gly) (interchain with G-Cter in SUMO2) linkage. Residue Lys159 is modified to N6-acetyllysine; alternate. Lys159 participates in a covalent cross-link: Glycyl lysine isopeptide (Lys-Gly) (interchain with G-Cter in SUMO2); alternate. Ser354 is modified (phosphoserine).

This sequence belongs to the WD repeat RBAP46/RBAP48/MSI1 family. Binds directly to helix 1 of the histone fold of histone H4, a region that is not accessible when H4 is in chromatin. Subunit of the type B histone acetyltransferase (HAT) complex, composed of RBBP7 and HAT1. Subunit of the core histone deacetylase (HDAC) complex, which is composed of HDAC1, HDAC2, RBBP4 and RBBP7. The core HDAC complex associates with SIN3A, ARID4B/SAP180, SAP18, SAP30, SAP130, SUDS3/SAP45 and possibly ARID4A/RBP1 and ING1 to form the SIN3 HDAC complex. Component of the nucleosome remodeling and deacetylase (NuRD) repressor complex, composed of core proteins MTA1, MTA2, MTA3, RBBP4, RBBP7, HDAC1, HDAC2, MBD2, MBD3, and peripherally associated proteins CDK2AP1, CDK2AP2, GATAD2A, GATAD2B, CHD3, CHD4 and CHD5. The exact stoichiometry of the NuRD complex is unknown, and some subunits such as MBD2 and MBD3, GATAD2A and GATAD2B, and CHD3, CHD4 and CHD5 define mutually exclusive NuRD complexes. The NuRD complex may interact with MBD3L1. The NuRD complex may interact with MBD3L2. Subunit of the PRC2/EED-EZH2 complex, which is composed of at least EED, EZH2, RBBP4, RBBP7 and SUZ12. The PRC2/EED-EZH2 complex may also associate with HDAC1. Component of the NURF-1 ISWI chromatin remodeling complex (also called the nucleosome-remodeling factor (NURF) complex) at least composed of SMARCA1, BPTF, RBBP4 and RBBP7. Within the complex interacts with SMARCA1. Component of the BPFT-SMARCA1 complex at least composed of SMARCA1, BPFT, RBBP4 and RBBP7; the complex is catalytically inactive and does not remodel chromatin. Within the complex interacts with SMARCA1. Interacts with BRCA1. Interacts with CDK2AP1. Interacts with CENPA. Interacts with CHD3. Interacts with CHD4. Interacts with CREBBP, and this interaction may be enhanced by the binding of phosphorylated CREB1 to CREBBP. Interacts with HDAC7. Interacts with MTA1. Interacts with PWWP2B. Interacts with RB1 (via viral protein-binding domain). Interacts with SUV39H1.

It localises to the nucleus. Functionally, core histone-binding subunit that may target chromatin remodeling factors, histone acetyltransferases and histone deacetylases to their histone substrates in a manner that is regulated by nucleosomal DNA. Component of several complexes which regulate chromatin metabolism. These include the type B histone acetyltransferase (HAT) complex, which is required for chromatin assembly following DNA replication; the core histone deacetylase (HDAC) complex, which promotes histone deacetylation and consequent transcriptional repression; the nucleosome remodeling and histone deacetylase complex (the NuRD complex), which promotes transcriptional repression by histone deacetylation and nucleosome remodeling; and the PRC2/EED-EZH2 complex, which promotes repression of homeotic genes during development; and the NURF (nucleosome remodeling factor) complex. This is Histone-binding protein RBBP7 (RBBP7) from Bos taurus (Bovine).